A 440-amino-acid chain; its full sequence is MRLSRYFLPILRENPKEAEIVSHRLMLRAGMIRQEAAGIYSWLPLGLRVLQKVAEIVRQEMNRAGAIELLMPTLQLADLWRETGRYEAYGPEMLRIKDRHEREMLYGPTNEDMITAIFRSYVRSYRELPKILYHIQWKFRDEQRPRFGVMRGREFLMKDAYSFDVDEAAARLAYNRMFVSYLRIFARMGLRVIPMRAETGPIGGDQSHEFIILAETGESAVYCDAGVLNLPIPDETIDYDGDLSPIVKQWTSLYAATEDVHDAERFALETTEGQRIETRGIEVGQVFFFGDKYSKPMNANIAGPDGVERPFQGGSYGVGVSRLVGALIEANHDEAGIIWPASVAPFKVGIANLKVGDAATDAACEKLLAALEKAGVDVLYDDSADRPGAKFAKLDLIGLPYQAIVGPKGLAEGKIEIKTRASGERVELSLDEAIERLIAS.

The protein belongs to the class-II aminoacyl-tRNA synthetase family. ProS type 2 subfamily. Homodimer.

It localises to the cytoplasm. It carries out the reaction tRNA(Pro) + L-proline + ATP = L-prolyl-tRNA(Pro) + AMP + diphosphate. Its function is as follows. Catalyzes the attachment of proline to tRNA(Pro) in a two-step reaction: proline is first activated by ATP to form Pro-AMP and then transferred to the acceptor end of tRNA(Pro). The polypeptide is Proline--tRNA ligase (Methylocella silvestris (strain DSM 15510 / CIP 108128 / LMG 27833 / NCIMB 13906 / BL2)).